Reading from the N-terminus, the 69-residue chain is Lantibiotic lichenicidin A2 (69 aa).

Residues 1 to 37 (MKNSAAREAFKGANHPAGMVSEEELKALVGGNDVNPE) constitute a propeptide that is removed on maturation. Thr-38 carries the post-translational modification 2-oxobutanoic acid. (Z)-2,3-didehydrobutyrine is present on residues Thr-39, Thr-42, and Thr-43. The segment at residues 44-48 (SSWTC) is a cross-link (lanthionine (Ser-Cys)). Ser-45 carries the post-translational modification 2,3-didehydroalanine (Ser). (Z)-2,3-didehydrobutyrine is present on residues Thr-50 and Thr-54. A cross-link (lanthionine (Ser-Cys)) is located at residues 56 to 60 (SASLC). Cross-links (beta-methyllanthionine (Thr-Cys)) lie at residues 62–65 (TTKC) and 66–69 (TSRC). (Z)-2,3-didehydrobutyrine is present on Thr-63.

In terms of processing, maturation of lantibiotics involves the enzymatic conversion of Thr, and Ser into dehydrated AA and the formation of thioether bonds with cysteine. This is followed by membrane translocation and cleavage of the modified precursor.

It localises to the secreted. It is found in the cell wall. Lanthionine-containing peptide antibiotic (lantibiotic) active on Gram-positive bacteria. The bactericidal activity of lantibiotics is based on depolarization of energized bacterial cytoplasmic membranes, initiated by the formation of aqueous transmembrane pores. When present individually, LchA2 exhibits activity towards L.lactis HP. When combined with LchA1, it displays activity towards a broad spectrum of non-pathogenic and pathogenic Gram-positive bacteria including strains of L.monocytogenes, methicillin-resistant S.aureus, S.pneumoniae and strains of vancomycin-resistant enterococci, but not towards E.faecium L4001 and BM4147-1. Combined LchA1 and LchA2 peptides also inhibit Bacillus sp. HIL-Y85/54728, L.lactis DPC3417 and B.halodurans C-125, which produce lantibiotics themselves. Inactivated by proteinase K and pronase E, but not by trypsin and chymotrypsin. The sequence is that of Lantibiotic lichenicidin A2 from Bacillus licheniformis (strain ATCC 14580 / DSM 13 / JCM 2505 / CCUG 7422 / NBRC 12200 / NCIMB 9375 / NCTC 10341 / NRRL NRS-1264 / Gibson 46).